The primary structure comprises 396 residues: MAARSALCFLAIITLFVYACGRPALNFNSIYKDSRSSVKHFPRVTDSRYAYTKIDSKLDSILSELQKEQNDRDDDDDDDDEDDLFDEINDIFDDVMDDDIEEDGDDIHEVEKIEEAVDDVIDMIDDIIDDDADDDSDDVPEDLNDAQEDILELIKDSNDDKNDDETSDIIDDILDIVEDAKDADDHRPIADIRVVESLSKPGAVAEDDKESKKIDETVQELLDEIKDVVEDANDDVNDILDTDDEDEDEDVQEEKDEDIHEDVGNVMVNLMHGVHGVTGGGVNHDIYEEIEEKMDEVDDFIDDAIDEHNDDDVNDDENDDVYDEHDDLVDDVNDDADDDNDDADDDNDDADDDNDDSDDNDDSDDDNDDDDIDDVADDVLEVIVDAVEAMNTPTNV.

The signal sequence occupies residues 1-21 (MAARSALCFLAIITLFVYACG). 4 coiled-coil regions span residues 53–73 (KIDSKLDSILSELQKEQNDRD), 109–129 (EVEKIEEAVDDVIDMIDDIID), 208–242 (DKESKKIDETVQELLDEIKDVVEDANDDVNDILDT), and 287–308 (YEEIEEKMDEVDDFIDDAIDEH). Positions 231 to 256 (DANDDVNDILDTDDEDEDEDVQEEKD) are enriched in acidic residues. Disordered regions lie at residues 231–260 (DANDDVNDILDTDDEDEDEDVQEEKDEDIH) and 288–378 (EEIE…VADD).

As to expression, component of the acid-insoluble and acid-soluble organic matrix of calcified layers of the shell (at protein level).

It is found in the secreted. The polypeptide is Coiled-coil domain-containing protein 1 (Lottia gigantea (Giant owl limpet)).